Reading from the N-terminus, the 324-residue chain is Granaticin polyketide synthase bifunctional cyclase/dehydratase (324 aa).

The tract at residues 1 to 21 is disordered; sequence MVQPAATPVSLPSPTVHRSEH.

It participates in antibiotic biosynthesis; granaticin biosynthesis. Its function is as follows. Is needed for correct cyclization of the oligoketide leading to isochromanequinone formation. The polypeptide is Granaticin polyketide synthase bifunctional cyclase/dehydratase (gra-orf4) (Streptomyces violaceoruber).